Reading from the N-terminus, the 474-residue chain is Sugar transporter ERD6-like 17 (474 aa).

12 consecutive transmembrane segments (helical) span residues 27-47 (ITAC…SFGV), 76-96 (FATL…MVIG), 106-126 (FLCI…LLNF), 129-149 (IISG…IAEI), 159-180 (TFSN…GNFI), 184-204 (TLAL…FFVP), 266-286 (TLVV…AAVI), 302-322 (IGTT…LILV), 329-349 (PLLM…GVAF), 363-383 (ILSF…LGGL), 403-423 (IVTL…NFLF), and 429-449 (GTFF…WLLV).

Belongs to the major facilitator superfamily. Sugar transporter (TC 2.A.1.1) family. In terms of tissue distribution, expressed in young seedlings.

It is found in the membrane. Functionally, sugar transporter. In Arabidopsis thaliana (Mouse-ear cress), this protein is Sugar transporter ERD6-like 17.